The chain runs to 332 residues: Glycerol-3-phosphate dehydrogenase [NAD(P)+] (332 aa).

3 residues coordinate NADPH: Trp-11, Arg-30, and Lys-108. Positions 108, 137, and 139 each coordinate sn-glycerol 3-phosphate. Ala-141 serves as a coordination point for NADPH. 5 residues coordinate sn-glycerol 3-phosphate: Lys-192, Asp-245, Ser-255, Arg-256, and Asn-257. The Proton acceptor role is filled by Lys-192. Arg-256 serves as a coordination point for NADPH. NADPH is bound by residues Val-280 and Glu-282.

This sequence belongs to the NAD-dependent glycerol-3-phosphate dehydrogenase family.

The protein resides in the cytoplasm. It carries out the reaction sn-glycerol 3-phosphate + NAD(+) = dihydroxyacetone phosphate + NADH + H(+). The enzyme catalyses sn-glycerol 3-phosphate + NADP(+) = dihydroxyacetone phosphate + NADPH + H(+). Its pathway is membrane lipid metabolism; glycerophospholipid metabolism. In terms of biological role, catalyzes the reduction of the glycolytic intermediate dihydroxyacetone phosphate (DHAP) to sn-glycerol 3-phosphate (G3P), the key precursor for phospholipid synthesis. The chain is Glycerol-3-phosphate dehydrogenase [NAD(P)+] from Burkholderia multivorans (strain ATCC 17616 / 249).